The primary structure comprises 514 residues: Adenylosuccinate synthetase 2, chloroplastic (514 aa).

A chloroplast-targeting transit peptide spans 1–56 (MAMAAAAAVASQGLLATSSQQQKKSSAKLICNAATFFSGKRLLWVKSCNNGAVGLR). GTP contacts are provided by residues 100–106 (GDEGKGK) and 128–130 (GHT). The Proton acceptor role is filled by Asp-101. Residues Asp-101 and Gly-128 each coordinate Mg(2+). Residues 101 to 104 (DEGK), 126 to 129 (NAGH), Thr-218, Arg-232, Gln-312, Thr-327, and Arg-391 contribute to the IMP site. Catalysis depends on His-129, which acts as the Proton donor. 387-393 (TTTGRPR) provides a ligand contact to substrate. GTP contacts are provided by residues Arg-393, 419 to 421 (KLD), and 502 to 504 (GVG).

It belongs to the adenylosuccinate synthetase family. Homodimer. The cofactor is Mg(2+).

The protein resides in the plastid. It localises to the chloroplast. The enzyme catalyses IMP + L-aspartate + GTP = N(6)-(1,2-dicarboxyethyl)-AMP + GDP + phosphate + 2 H(+). It functions in the pathway purine metabolism; AMP biosynthesis via de novo pathway; AMP from IMP: step 1/2. Plays an important role in the de novo pathway and in the salvage pathway of purine nucleotide biosynthesis. Catalyzes the first committed step in the biosynthesis of AMP from IMP. The protein is Adenylosuccinate synthetase 2, chloroplastic of Physcomitrium patens (Spreading-leaved earth moss).